A 153-amino-acid chain; its full sequence is Endoribonuclease YbeY (153 aa).

Residues His114, His118, and His124 each contribute to the Zn(2+) site.

Belongs to the endoribonuclease YbeY family. The cofactor is Zn(2+).

It localises to the cytoplasm. Single strand-specific metallo-endoribonuclease involved in late-stage 70S ribosome quality control and in maturation of the 3' terminus of the 16S rRNA. This is Endoribonuclease YbeY from Shewanella amazonensis (strain ATCC BAA-1098 / SB2B).